The following is a 184-amino-acid chain: MKNVTDSFVSLGHWPSAGSFGFNTDILATNLINLSVVLGVLIFFGKGVLSDLLDNRKQRILNTIRNSEELRGGAIEQLEKARSRLRKVESEAEQFRVNGYSEIEREKLNLINSTYKTLEQLENYKNETIQFEQQRAINQVRQRVFQQALRGALGTLNSCLNNELHLRTISANIGMLGTMKEITD.

The helical transmembrane segment at 27 to 49 (LATNLINLSVVLGVLIFFGKGVL) threads the bilayer.

Belongs to the ATPase B chain family. As to quaternary structure, F-type ATPases have 2 components, F(1) - the catalytic core - and F(0) - the membrane proton channel. F(1) has five subunits: alpha(3), beta(3), gamma(1), delta(1), epsilon(1). F(0) has four main subunits: a(1), b(1), b'(1) and c(10-14). The alpha and beta chains form an alternating ring which encloses part of the gamma chain. F(1) is attached to F(0) by a central stalk formed by the gamma and epsilon chains, while a peripheral stalk is formed by the delta, b and b' chains.

It localises to the plastid. Its subcellular location is the chloroplast thylakoid membrane. F(1)F(0) ATP synthase produces ATP from ADP in the presence of a proton or sodium gradient. F-type ATPases consist of two structural domains, F(1) containing the extramembraneous catalytic core and F(0) containing the membrane proton channel, linked together by a central stalk and a peripheral stalk. During catalysis, ATP synthesis in the catalytic domain of F(1) is coupled via a rotary mechanism of the central stalk subunits to proton translocation. Functionally, component of the F(0) channel, it forms part of the peripheral stalk, linking F(1) to F(0). The chain is ATP synthase subunit b, chloroplastic from Nicotiana tabacum (Common tobacco).